The sequence spans 345 residues: DNA primase small subunit PriS (345 aa).

Active-site residues include D95 and D97. The Zn(2+) site is built by C106, H108, C114, and C117. The Zinc knuckle motif signature appears at 106–117 (CNHEPGKVCPIC). D280 is a catalytic residue.

The protein belongs to the eukaryotic-type primase small subunit family. In terms of assembly, heterodimer of a small subunit (PriS) and a large subunit (PriL). The cofactor is Mg(2+). It depends on Mn(2+) as a cofactor.

Functionally, catalytic subunit of DNA primase, an RNA polymerase that catalyzes the synthesis of short RNA molecules used as primers for DNA polymerase during DNA replication. The small subunit contains the primase catalytic core and has DNA synthesis activity on its own, synthesizing DNA strands up to 3 kB. Binding to the large subunit stabilizes and modulates the activity, increasing the rate of DNA synthesis while decreasing the length of the DNA fragments, and conferring RNA synthesis capability for RNA fragments up to 150 bases. The DNA polymerase activity may enable DNA primase to also catalyze primer extension after primer synthesis. May also play a role in DNA repair. Displays gap-filling and strand-displacement activities. The polypeptide is DNA primase small subunit PriS (Pyrococcus abyssi (strain GE5 / Orsay)).